The chain runs to 209 residues: CASP-like protein 2A2 (209 aa).

At 1-37 the chain is on the cytoplasmic side; that stretch reads MSKTAGVGRLGGARAADAAQQQQLAAGDAAVARAARP. Residues 38–58 traverse the membrane as a helical segment; that stretch reads IETLLRAAPLVLCVAAMTLML. Topologically, residues 59–79 are extracellular; the sequence is RDQQSNEYGTVAYSDLGGFKY. Residues 80 to 100 form a helical membrane-spanning segment; the sequence is LVYANGLCAAYSLASAFYTAV. Residues 101–109 lie on the Cytoplasmic side of the membrane; it reads PRPATVSRS. Residues 110–130 form a helical membrane-spanning segment; that stretch reads WVVFLLDQVFTYLILAAGAAA. At 131–161 the chain is on the extracellular side; it reads AELLYLAYNGDKEVTWSEACGVFGSFCRQAR. A helical membrane pass occupies residues 162–182; that stretch reads ISVAITFGAVLCFILLSLLSS. Residues 183–209 lie on the Cytoplasmic side of the membrane; the sequence is YRLFSAYEAPPPSALGSKGVEIAAYPR.

It belongs to the Casparian strip membrane proteins (CASP) family. Homodimer and heterodimers.

It localises to the cell membrane. The sequence is that of CASP-like protein 2A2 from Zea mays (Maize).